Here is a 592-residue protein sequence, read N- to C-terminus: NADH-quinone oxidoreductase subunit C/D (592 aa).

The segment at 1–183 is NADH dehydrogenase I subunit C; that stretch reads MLTEFNSIPA…GPYILTEEKE (183 aa). Residues 207 to 592 are NADH dehydrogenase I subunit D; sequence DFMFLNLGPN…IDFVMADVDR (386 aa).

This sequence in the N-terminal section; belongs to the complex I 30 kDa subunit family. It in the C-terminal section; belongs to the complex I 49 kDa subunit family. In terms of assembly, NDH-1 is composed of 13 different subunits. Subunits NuoB, CD, E, F, and G constitute the peripheral sector of the complex.

Its subcellular location is the cell inner membrane. The catalysed reaction is a quinone + NADH + 5 H(+)(in) = a quinol + NAD(+) + 4 H(+)(out). Its function is as follows. NDH-1 shuttles electrons from NADH, via FMN and iron-sulfur (Fe-S) centers, to quinones in the respiratory chain. The immediate electron acceptor for the enzyme in this species is believed to be ubiquinone. Couples the redox reaction to proton translocation (for every two electrons transferred, four hydrogen ions are translocated across the cytoplasmic membrane), and thus conserves the redox energy in a proton gradient. The sequence is that of NADH-quinone oxidoreductase subunit C/D from Acidiphilium cryptum (strain JF-5).